The sequence spans 400 residues: 11-beta-hydroxysteroid dehydrogenase type 2 (400 aa).

82–111 (TRAVLITGCDTGFGKETAKKLDAMGFTVLA) is a binding site for NAD(+). A substrate-binding site is contributed by S219. The Proton acceptor role is filled by Y232. The tract at residues 378 to 400 (PGQPGPVHDTTQDPNPSPTVSAL) is disordered. Residues 389 to 400 (QDPNPSPTVSAL) are compositionally biased toward polar residues.

The protein belongs to the short-chain dehydrogenases/reductases (SDR) family. In terms of assembly, interacts with ligand-free cytoplasmic NR3C2. As to expression, highly expressed in kidney, adrenal gland and distal colon, and at much lower levels in lung, hypothalamus, hippocampus, and midbrain.

The protein resides in the microsome. The protein localises to the endoplasmic reticulum. The catalysed reaction is an 11beta-hydroxysteroid + NAD(+) = an 11-oxosteroid + NADH + H(+). The enzyme catalyses corticosterone + NAD(+) = 11-dehydrocorticosterone + NADH + H(+). It carries out the reaction 11beta,17beta-dihydroxyandrost-4-ene-3-one + NAD(+) = 17beta-hydroxyandrost-4-ene-3,11-dione + NADH + H(+). It catalyses the reaction 11beta-hydroxyandrost-4-ene-3,17-dione + NAD(+) = androst-4-ene-3,11,17-trione + NADH + H(+). It participates in steroid metabolism. Its activity is regulated as follows. Inhibited by glycyrrhetinic acid. Induced by progesterone, through the Ihh signaling pathway. Its function is as follows. Catalyzes the conversion of biologically active 11beta-hydroxyglucocorticoids (11beta-hydroxysteroid) such as corticosterone, to inactive 11-ketoglucocorticoids (11-oxosteroid) such as 11-dehydrocorticosterone, in the presence of NAD(+). Functions as a dehydrogenase (oxidase), thereby decreasing the concentration of active glucocorticoids, thus protecting the nonselective mineralocorticoid receptor from occupation by glucocorticoids. Plays an important role in maintaining glucocorticoids balance during preimplantation and protects the fetus from excessive maternal corticosterone exposure. Catalyzes the oxidation of 11beta-hydroxytestosterone (11beta,17beta-dihydroxyandrost-4-ene-3-one) to 11-ketotestosterone (17beta-hydroxyandrost-4-ene-3,11-dione), a major bioactive androgen. Catalyzes the conversion of 11beta-hydroxyandrostenedione (11beta-hydroxyandrost-4-ene-3,17-dione) to 11-ketoandrostenedione (androst-4-ene-3,11,17-trione), which can be further metabolized to 11-ketotestosterone. Converts 7-beta-25-dihydroxycholesterol to 7-oxo-25-hydroxycholesterol in vitro. 7-beta-25-dihydroxycholesterol (not 7-oxo-25-hydroxycholesterol) acts as a ligand for the G-protein-coupled receptor (GPCR) Epstein-Barr virus-induced gene 2 (EBI2) and may thereby regulate immune cell migration. This chain is 11-beta-hydroxysteroid dehydrogenase type 2 (Hsd11b2), found in Rattus norvegicus (Rat).